The following is a 787-amino-acid chain: MGIELVCLFLLLLGRNDHVQGGCAWGGAESCSDCLLTGPHCAWCSQENFTHLSGAGERCDTPANLLAKGCQLPFIENPVSRIEVLQNKPLSVGRQKNSSDIVQIAPQSLVLKLRPGREQTLQVQVRQTEDYPVDLYYLMDLSASMDDDLNTIKELGSRLAKEMSKLTSNFRLGFGSFVEKPVSPFMKTTPEEITNPCSSIPYFCLPTFGFKHILPLTDDAERFNEIVRKQKISANIDTPEGGFDAIMQAAVCKEKIGWRNDSLHLLVFVSDADSHFGMDSKLAGIVIPNDGLCHLDHRNEYSMSTVLEYPTIGQLIDKLVQNNVLLIFAVTQEQVHLYENYAKLIPGATVGLLQKDSGNILQLIISAYEELRSEVELEVLGDTEGLNLSFTALCNNGVLFPHQKKCSHMKVGDTASFNVTVSVSNCEKRSRNLIIKPVGLGDTLEILVSAECDCDCQREIETNSSKCHNGNGSFQCGVCTCNPGHMGPHCECGEDMVSTDSCKESPGHPSCSGRGDCYCGQCICHLSPYGSIYGPYCQCDNFSCLRHKGLLCGDNGDCDCGECVCRDGWTGEYCNCTTNRDSCTSEDGVLCSGRGDCVCGKCVCRNPGASGPTCERCPTCGDPCNSKRSCIECYLSADGQAQEECADKCKAIGATISEEDFSKDTSVSCSLQGENECLITFLITTDNEGKTIIHNINEKDCPKPPNIPMIMLGVSLAILLIGVVLLCIWKLLVSFHDRKEVAKFEAERSKAKWQTGTNPLYRGSTSTFKNVTYKHREKHKAGLSSDG.

An N-terminal signal peptide occupies residues methionine 1–glycine 21. The region spanning glycine 22 to glutamine 71 is the PSI domain. The Extracellular segment spans residues glycine 22 to proline 708. 19 cysteine pairs are disulfide-bonded: cysteine 23–cysteine 41, cysteine 31–cysteine 454, cysteine 34–cysteine 59, cysteine 44–cysteine 70, cysteine 197–cysteine 204, cysteine 252–cysteine 293, cysteine 394–cysteine 406, cysteine 426–cysteine 452, cysteine 456–cysteine 476, cysteine 467–cysteine 479, cysteine 481–cysteine 490, cysteine 492–cysteine 519, cysteine 502–cysteine 517, cysteine 511–cysteine 522, cysteine 524–cysteine 537, cysteine 539–cysteine 560, cysteine 544–cysteine 558, cysteine 552–cysteine 563, and cysteine 565–cysteine 574. Residues asparagine 48 and asparagine 97 are each glycosylated (N-linked (GlcNAc...) asparagine). Residues tyrosine 131–leucine 371 form the VWFA domain. The Mg(2+) site is built by aspartate 140, serine 142, and serine 144. Residues serine 144, aspartate 147, aspartate 148, and glutamate 179 each coordinate Ca(2+). Residues asparagine 235, aspartate 237, proline 239, and glutamate 240 each contribute to the Ca(2+) site. Glutamate 240 is a binding site for Mg(2+). N-linked (GlcNAc...) asparagine glycosylation occurs at asparagine 260. Ca(2+) contacts are provided by aspartate 271 and lysine 355. The N-linked (GlcNAc...) asparagine glycan is linked to asparagine 387. Asparagine 418 is a glycosylation site (N-linked (GlcNAc...) asparagine). I-EGF domains lie at cysteine 456–glutamate 491, cysteine 492–glutamine 538, cysteine 539–asparagine 575, and cysteine 576–glutamate 615. 2 N-linked (GlcNAc...) asparagine glycosylation sites follow: asparagine 463 and asparagine 471. N-linked (GlcNAc...) asparagine glycosylation is present at asparagine 541. Residue asparagine 575 is glycosylated (N-linked (GlcNAc...) asparagine). 9 cysteine pairs are disulfide-bonded: cysteine 576-cysteine 599, cysteine 583-cysteine 597, cysteine 591-cysteine 602, cysteine 604-cysteine 614, cysteine 617-cysteine 620, cysteine 624-cysteine 669, cysteine 630-cysteine 649, cysteine 633-cysteine 645, and cysteine 677-cysteine 701. The chain crosses the membrane as a helical span at residues methionine 709 to tryptophan 729. The interaction with HAX1 stretch occupies residues lysine 730–threonine 757. At lysine 730–glycine 787 the chain is on the cytoplasmic side.

Belongs to the integrin beta chain family. Heterodimer of an alpha and a beta subunit. Interacts with FLNB. Interacts with HAX1. ITGAV:ITGB6 interacts with FBN1. ITGAV:ITGB6 interacts with TGFB1.

It localises to the cell membrane. The protein resides in the cell junction. Its subcellular location is the focal adhesion. Its function is as follows. Integrin alpha-V:beta-6 (ITGAV:ITGB6) is a receptor for fibronectin and cytotactin. It recognizes the sequence R-G-D in its ligands. ITGAV:ITGB6 acts as a receptor for fibrillin-1 (FBN1) and mediates R-G-D-dependent cell adhesion to FBN1. Integrin alpha-V:beta-6 (ITGAV:ITGB6) mediates R-G-D-dependent release of transforming growth factor beta-1 (TGF-beta-1) from regulatory Latency-associated peptide (LAP), thereby playing a key role in TGF-beta-1 activation. This is Integrin beta-6 (Itgb6) from Mus musculus (Mouse).